Reading from the N-terminus, the 1232-residue chain is Anion exchange protein 3 (1232 aa).

Residues 1–11 (MANGVIPPPGG) show a composition bias toward pro residues. Disordered regions lie at residues 1–316 (MANG…KLDR) and 429–498 (NDDK…GDGH). At 1–708 (MANGVIPPPG…DLRDALHSQC (708 aa)) the chain is on the cytoplasmic side. Positions 58–75 (DPEKPSRSYSERDFEFHR) are enriched in basic and acidic residues. Basic residues-rich tracts occupy residues 76–97 (HTSH…KLRR) and 104–113 (RHTRRKRKKE). Acidic residues predominate over residues 134 to 152 (VDEEEEEEEEEEGESEAEP). 4 positions are modified to phosphoserine: Ser167, Ser170, Ser175, and Ser198. Positions 200–215 (QHSSSSPSPRARASRL) are enriched in low complexity. Positions 267-279 (DDMKSHRLEDNPG) are enriched in basic and acidic residues. Over residues 280-289 (VRRHLVKKPS) the composition is skewed to basic residues. Arg295 carries the post-translational modification Omega-N-methylarginine. The span at 305-316 (LRRKKKKKKLDR) shows a compositional bias: basic residues. Over residues 440-450 (NPSSSSMNSVL) the composition is skewed to polar residues. Basic and acidic residues predominate over residues 481-498 (HDPDAKEKPLHMPGGDGH). 5 helical membrane-spanning segments follow: residues 709–731 (VAAV…GLLG), 737–774 (LMGV…LLVF), 794–816 (VWVG…SFLV), 826–847 (IFAF…YKVF), and 893–910 (ALLS…AFFL). The interval 709 to 1232 (VAAVLFIYFA…DEYNELHMPV (524 aa)) is membrane (anion exchange). Over 911 to 925 (RKFRNSRFLGGKARR) the chain is Cytoplasmic. The next 5 helical transmembrane spans lie at 926-946 (IIGD…DYSI), 980-1002 (PFPP…LIFM), 1028-1049 (LLLI…LTAA), 1083-1128 (VTGV…IQLS), and 1155-1191 (MHLF…TVPL). Cys1165 carries the S-palmitoyl cysteine lipid modification.

Belongs to the anion exchanger (TC 2.A.31) family. Expressed in the heart.

The protein resides in the cell membrane. It carries out the reaction hydrogencarbonate(in) + chloride(out) = hydrogencarbonate(out) + chloride(in). In terms of biological role, sodium-independent anion exchanger which mediates the electroneutral exchange of chloride for bicarbonate ions across the cell membrane. May be involved in the regulation of intracellular pH, and the modulation of cardiac action potential. This Homo sapiens (Human) protein is Anion exchange protein 3 (SLC4A3).